The primary structure comprises 73 residues: Potassium channel toxin alpha-KTx 27.1 (73 aa).

Residues 1–23 form the signal peptide; it reads MKFLFLTLFVCCFIAVLVIPSEA.

This sequence belongs to the short scorpion toxin superfamily. Potassium channel inhibitor family. Alpha-KTx 27 subfamily. Contains 4 disulfide bonds. Expressed by the venom gland.

Its subcellular location is the secreted. The chain is Potassium channel toxin alpha-KTx 27.1 from Buthus israelis (Israeli scorpion).